The chain runs to 664 residues: uncharacterized protein (664 aa).

The first 25 residues, 1 to 25 (MSWKRYLKWVSFAIIPLLFANTSIK), serve as a signal peptide directing secretion. Residues 625–645 (IIVYLIIGFSVLVLFITVFIY) form a helical membrane-spanning segment.

This sequence belongs to the MG414/MG415 family.

It localises to the cell membrane. This is an uncharacterized protein from Mycoplasma genitalium (strain ATCC 33530 / DSM 19775 / NCTC 10195 / G37) (Mycoplasmoides genitalium).